The chain runs to 181 residues: ATP-dependent protease subunit HslV (181 aa).

T2 is an active-site residue. The Na(+) site is built by G157, C160, and T163.

The protein belongs to the peptidase T1B family. HslV subfamily. In terms of assembly, a double ring-shaped homohexamer of HslV is capped on each side by a ring-shaped HslU homohexamer. The assembly of the HslU/HslV complex is dependent on binding of ATP.

The protein localises to the cytoplasm. It catalyses the reaction ATP-dependent cleavage of peptide bonds with broad specificity.. Its activity is regulated as follows. Allosterically activated by HslU binding. In terms of biological role, protease subunit of a proteasome-like degradation complex believed to be a general protein degrading machinery. The protein is ATP-dependent protease subunit HslV of Hahella chejuensis (strain KCTC 2396).